The sequence spans 1121 residues: Phytochrome 2 (1121 aa).

Residues 214–393 (DIGLLCDTVV…VFGMQLNMEV (180 aa)) form the GAF domain. Cys-319 is a binding site for phytochromobilin. PAS domains are found at residues 608-679 (VANE…SQGE) and 742-813 (DYKT…TKFM). Positions 893 to 1113 (YIRQEIKNPL…VVYVELPMAQ (221 aa)) constitute a Histidine kinase domain.

Belongs to the phytochrome family. Homodimer. Post-translationally, contains one covalently linked phytochromobilin chromophore.

In terms of biological role, regulatory photoreceptor which exists in two forms that are reversibly interconvertible by light: the Pr form that absorbs maximally in the red region of the spectrum and the Pfr form that absorbs maximally in the far-red region. Photoconversion of Pr to Pfr induces an array of morphogenic responses, whereas reconversion of Pfr to Pr cancels the induction of those responses. Pfr controls the expression of a number of nuclear genes including those encoding the small subunit of ribulose-bisphosphate carboxylase, chlorophyll A/B binding protein, protochlorophyllide reductase, rRNA, etc. It also controls the expression of its own gene(s) in a negative feedback fashion. The chain is Phytochrome 2 (PHY2) from Ceratodon purpureus (Fire moss).